The chain runs to 215 residues: Thiamine-phosphate synthase (215 aa).

4-amino-2-methyl-5-(diphosphooxymethyl)pyrimidine contacts are provided by residues 37-41 and asparagine 69; that span reads QLRIK. The Mg(2+) site is built by aspartate 70 and aspartate 89. Residue serine 108 participates in 4-amino-2-methyl-5-(diphosphooxymethyl)pyrimidine binding. 134–136 lines the 2-[(2R,5Z)-2-carboxy-4-methylthiazol-5(2H)-ylidene]ethyl phosphate pocket; that stretch reads TQT. Residue lysine 137 participates in 4-amino-2-methyl-5-(diphosphooxymethyl)pyrimidine binding. 2-[(2R,5Z)-2-carboxy-4-methylthiazol-5(2H)-ylidene]ethyl phosphate is bound by residues glycine 166 and 186–187; that span reads VS.

Belongs to the thiamine-phosphate synthase family. Mg(2+) serves as cofactor.

The enzyme catalyses 2-[(2R,5Z)-2-carboxy-4-methylthiazol-5(2H)-ylidene]ethyl phosphate + 4-amino-2-methyl-5-(diphosphooxymethyl)pyrimidine + 2 H(+) = thiamine phosphate + CO2 + diphosphate. It carries out the reaction 2-(2-carboxy-4-methylthiazol-5-yl)ethyl phosphate + 4-amino-2-methyl-5-(diphosphooxymethyl)pyrimidine + 2 H(+) = thiamine phosphate + CO2 + diphosphate. The catalysed reaction is 4-methyl-5-(2-phosphooxyethyl)-thiazole + 4-amino-2-methyl-5-(diphosphooxymethyl)pyrimidine + H(+) = thiamine phosphate + diphosphate. Its pathway is cofactor biosynthesis; thiamine diphosphate biosynthesis; thiamine phosphate from 4-amino-2-methyl-5-diphosphomethylpyrimidine and 4-methyl-5-(2-phosphoethyl)-thiazole: step 1/1. Condenses 4-methyl-5-(beta-hydroxyethyl)thiazole monophosphate (THZ-P) and 2-methyl-4-amino-5-hydroxymethyl pyrimidine pyrophosphate (HMP-PP) to form thiamine monophosphate (TMP). This Yersinia pseudotuberculosis serotype I (strain IP32953) protein is Thiamine-phosphate synthase.